Reading from the N-terminus, the 291-residue chain is uncharacterized protein (291 aa).

The HTH araC/xylS-type domain maps to 191–289 (KQMLNWIHLH…NMTPLSYKKM (99 aa)). 2 consecutive DNA-binding regions (H-T-H motif) follow at residues 208–229 (EDIA…KRML) and 256–279 (VTEV…QQAM).

This is an uncharacterized protein from Bacillus subtilis (strain 168).